Here is a 315-residue protein sequence, read N- to C-terminus: Hydroxysteroid 11-beta-dehydrogenase 1-like protein (315 aa).

The signal sequence occupies residues 1–15; sequence MKVLLLTGLGALFFA. NADP(+)-binding positions include 36-62, 87-88, and 114-116; these read GANA…TAHT, DM, and NHI. Serine 165 provides a ligand contact to substrate. Tyrosine 178 serves as the catalytic Proton acceptor. NADP(+) is bound by residues 178–182 and 211–217; these read YSAAK and GLRDRAS. Residues 221–286 form a disordered region; the sequence is AVRSSTSRPR…SKTEKNDGHL (66 aa). The segment covering 277-286 has biased composition (basic and acidic residues); that stretch reads SKTEKNDGHL.

It belongs to the short-chain dehydrogenases/reductases (SDR) family. In terms of tissue distribution, highly expressed in the brain.

The protein localises to the secreted. It carries out the reaction cortisone + NADPH + H(+) = cortisol + NADP(+). Functionally, unidirectional NADP(+)-dependent cortisol dehydrogenase (in vitro). The chain is Hydroxysteroid 11-beta-dehydrogenase 1-like protein (HSD11B1L) from Homo sapiens (Human).